The following is a 208-amino-acid chain: Protein-L-isoaspartate O-methyltransferase (208 aa).

Ser59 is a catalytic residue.

This sequence belongs to the methyltransferase superfamily. L-isoaspartyl/D-aspartyl protein methyltransferase family.

The protein resides in the cytoplasm. It catalyses the reaction [protein]-L-isoaspartate + S-adenosyl-L-methionine = [protein]-L-isoaspartate alpha-methyl ester + S-adenosyl-L-homocysteine. Functionally, catalyzes the methyl esterification of L-isoaspartyl residues in peptides and proteins that result from spontaneous decomposition of normal L-aspartyl and L-asparaginyl residues. It plays a role in the repair and/or degradation of damaged proteins. The protein is Protein-L-isoaspartate O-methyltransferase of Yersinia enterocolitica serotype O:8 / biotype 1B (strain NCTC 13174 / 8081).